The following is a 321-amino-acid chain: Lipoyl synthase (321 aa).

Cysteine 68, cysteine 73, cysteine 79, cysteine 94, cysteine 98, cysteine 101, and serine 308 together coordinate [4Fe-4S] cluster. In terms of domain architecture, Radical SAM core spans 80-297; the sequence is FNHGTATFMI…KAEAMAMGFT (218 aa).

Belongs to the radical SAM superfamily. Lipoyl synthase family. [4Fe-4S] cluster is required as a cofactor.

Its subcellular location is the cytoplasm. The catalysed reaction is [[Fe-S] cluster scaffold protein carrying a second [4Fe-4S](2+) cluster] + N(6)-octanoyl-L-lysyl-[protein] + 2 oxidized [2Fe-2S]-[ferredoxin] + 2 S-adenosyl-L-methionine + 4 H(+) = [[Fe-S] cluster scaffold protein] + N(6)-[(R)-dihydrolipoyl]-L-lysyl-[protein] + 4 Fe(3+) + 2 hydrogen sulfide + 2 5'-deoxyadenosine + 2 L-methionine + 2 reduced [2Fe-2S]-[ferredoxin]. It functions in the pathway protein modification; protein lipoylation via endogenous pathway; protein N(6)-(lipoyl)lysine from octanoyl-[acyl-carrier-protein]: step 2/2. In terms of biological role, catalyzes the radical-mediated insertion of two sulfur atoms into the C-6 and C-8 positions of the octanoyl moiety bound to the lipoyl domains of lipoate-dependent enzymes, thereby converting the octanoylated domains into lipoylated derivatives. This is Lipoyl synthase from Enterobacter sp. (strain 638).